We begin with the raw amino-acid sequence, 218 residues long: uncharacterized protein (218 aa).

Residues 1–28 (MLSLQCLPPFFISVPNRSTNSCSTAPLR) constitute a chloroplast transit peptide.

This sequence belongs to the SixA phosphatase family.

The protein localises to the plastid. The protein resides in the chloroplast. This is an uncharacterized protein from Arabidopsis thaliana (Mouse-ear cress).